A 241-amino-acid polypeptide reads, in one-letter code: Transmembrane protein 176A (241 aa).

Serine 38 bears the Phosphoserine mark. The next 4 helical transmembrane spans lie at 65-85 (WVMQIVLGLLSGVLGGFLYIF), 93-113 (SGAPIWTGAVAVLAGAVAFIY), 127-147 (LLALAAFSTATAATIIGAGRF), and 193-213 (LFISINAMLLGVWVLLLLASL).

This sequence belongs to the TMEM176 family. Interacts with MCOLN2.

The protein resides in the membrane. In Bos taurus (Bovine), this protein is Transmembrane protein 176A (TMEM176A).